Consider the following 70-residue polypeptide: MPILSKYSNEQVEQIVDQLIDVLTQHNAPVDLSLMCLGNSITHILKEHVPTGKRQAVTENFAKALAQSVK.

Belongs to the UPF0352 family.

This Pseudoalteromonas translucida (strain TAC 125) protein is UPF0352 protein PSHAa1818.